Consider the following 318-residue polypeptide: Probable cell division protein WhiA (318 aa).

The segment at residues 281–314 (SLKELGQMLVPPVGKSGVNHRLRKIEEISKKLKE) is a DNA-binding region (H-T-H motif).

This sequence belongs to the WhiA family.

Functionally, involved in cell division and chromosome segregation. The protein is Probable cell division protein WhiA of Thermoanaerobacter sp. (strain X514).